A 342-amino-acid chain; its full sequence is MSAAGGLLARLETRVTREWQRRSAFAWALTPFACAFGLCAALRRTAYARGWKQAVDVGVPVVVVGNVTVGGTGKTPTVIALVDALRAAGFTPGVVSRGYGANVKTPTAVTPASRAGAAGDEPLLIARRTGAPVWVCPDRVAAAQALRAAHPDVDVIVSDDGLQHYRLARTVELVVFDHRLGGNGFLLPAGPLREPLSRHRDATLVNDPYSGALPPWPDTYSLALTPGAAWHLDQPTLRRPLSQFANERVLAAAGIGAPERFFATLRAAGLAPATRALPDHYAFADNPFVDDAVDAILITEKDAVKLGASWRDARLWVVPVEAALDPRLIALVVEKLRGRSPA.

68–75 contacts ATP; that stretch reads TVGGTGKT.

It belongs to the LpxK family.

The enzyme catalyses a lipid A disaccharide + ATP = a lipid IVA + ADP + H(+). It participates in glycolipid biosynthesis; lipid IV(A) biosynthesis; lipid IV(A) from (3R)-3-hydroxytetradecanoyl-[acyl-carrier-protein] and UDP-N-acetyl-alpha-D-glucosamine: step 6/6. Transfers the gamma-phosphate of ATP to the 4'-position of a tetraacyldisaccharide 1-phosphate intermediate (termed DS-1-P) to form tetraacyldisaccharide 1,4'-bis-phosphate (lipid IVA). The chain is Tetraacyldisaccharide 4'-kinase from Burkholderia multivorans (strain ATCC 17616 / 249).